Consider the following 398-residue polypeptide: Dihydroorotase (398 aa).

Positions 58 and 60 each coordinate Zn(2+). Residues 60-62 and Asn-92 each bind substrate; that span reads HFR. Residues Asp-151, His-178, and His-215 each coordinate Zn(2+). Asn-256 is a substrate binding site. Asp-283 contacts Zn(2+). Residue Asp-283 is part of the active site. Residues His-287 and 297–298 each bind substrate; that span reads PG.

Belongs to the metallo-dependent hydrolases superfamily. DHOase family. Class I DHOase subfamily. The cofactor is Zn(2+).

It catalyses the reaction (S)-dihydroorotate + H2O = N-carbamoyl-L-aspartate + H(+). It participates in pyrimidine metabolism; UMP biosynthesis via de novo pathway; (S)-dihydroorotate from bicarbonate: step 3/3. Its function is as follows. Catalyzes the reversible cyclization of carbamoyl aspartate to dihydroorotate. This Clostridium botulinum (strain Eklund 17B / Type B) protein is Dihydroorotase.